The following is a 59-amino-acid chain: Large ribosomal subunit protein uL30 (59 aa).

This sequence belongs to the universal ribosomal protein uL30 family. Part of the 50S ribosomal subunit.

The protein is Large ribosomal subunit protein uL30 of Nocardia farcinica (strain IFM 10152).